The primary structure comprises 442 residues: MMRKLAILSVSSFLFVEALFQEYQCYGSSSNTRVLNELNYDNAGTNLYNELEMNYYGKQENWYSLKKNSRSLGENDDGDNDNGNNNNGNNNNGDNGREGKDEDKRDGNNEDNEKLRKPKHKKLKQPGDGNPDPNANPNVDPNANPNVDPNANPNANPNANPNANPNANPNANPNANPNANPNANPNANPNANPNANPNANPNANPNANPNVDPNANPNANPNANPNANPNANPNANPNANPNANPNANPNANPNANPNANPNANPNANPNANPNANPNANPNANPNANPNANPNANPNANPNANPNANPNANPNANPNKNNQGNGQGHNMPNDPNRNVDENANANNAVKNNNNEEPSDKHIEQYLKKIQNSLSTEWSPCSVTCGNGIQVRIKPGSADKPKDQLDYENDIEKKICKMEKCSSVFNVVNSSIGLIMVLSFLFLN.

The first 18 residues, 1–18 (MMRKLAILSVSSFLFVEA), serve as a signal peptide directing secretion. Residues 69 to 357 (SRSLGENDDG…VKNNNNEEPS (289 aa)) form a disordered region. Low complexity predominate over residues 81–94 (DNGNNNNGNNNNGD). Positions 95-115 (NGREGKDEDKRDGNNEDNEKL) are enriched in basic and acidic residues. Positions 114-121 (KLRKPKHK) are required for the binding to heparan sulfate proteoglycans (HSPGs) on the surface of host hepatocytes. Residues 122–126 (KLKQP) form a region I; contains the proteolytic cleavage site region. Positions 130-318 (NPDPNANPNV…PNANPNANPN (189 aa)) are enriched in low complexity. 46 tandem repeats follow at residues 134–137 (NANP), 138–141 (NVDP), 142–145 (NANP), 146–149 (NVDP), 150–153 (NANP), 154–157 (NANP), 158–161 (NANP), 162–165 (NANP), 166–169 (NANP), 170–173 (NANP), 174–177 (NANP), 178–181 (NANP), 182–185 (NANP), 186–189 (NANP), 190–193 (NANP), 194–197 (NANP), 198–201 (NANP), 202–205 (NANP), 206–209 (NANP), 210–213 (NVDP), 214–217 (NANP), 218–221 (NANP), 222–225 (NANP), 226–229 (NANP), 230–233 (NANP), 234–237 (NANP), 238–241 (NANP), 242–245 (NANP), 246–249 (NANP), 250–253 (NANP), 254–257 (NANP), 258–261 (NANP), 262–265 (NANP), 266–269 (NANP), 270–273 (NANP), 274–277 (NANP), 278–281 (NANP), 282–285 (NANP), 286–289 (NANP), 290–293 (NANP), 294–297 (NANP), 298–301 (NANP), 302–305 (NANP), 306–309 (NANP), 310–313 (NANP), and 314–317 (NANP). The interval 134–317 (NANPNVDPNA…NPNANPNANP (184 aa)) is 46 X 4 AA tandem repeats of N-[AV]-[ND]-P. A compositionally biased stretch (polar residues) spans 319–334 (KNNQGNGQGHNMPNDP). Residues 340-354 (ENANANNAVKNNNNE) show a composition bias toward low complexity. Residues 367 to 420 (KIQNSLSTEWSPCSVTCGNGIQVRIKPGSADKPKDQLDYENDIEKKICKMEKCS) form the TSP type-1 domain. Disulfide bonds link Cys379–Cys414 and Cys383–Cys419. O-linked (Fuc) threonine glycosylation is present at Thr382. Cys419 carries the GPI-anchor amidated cysteine lipid modification. Residues 420 to 442 (SSVFNVVNSSIGLIMVLSFLFLN) constitute a propeptide, removed in mature form.

The protein belongs to the plasmodium circumsporozoite protein family. Post-translationally, during host cell invasion, proteolytically cleaved at the cell membrane in the region I by a papain-like cysteine protease of parasite origin. Cleavage is triggered by the sporozoite contact with highly sulfated heparan sulfate proteoglycans (HSPGs) present on the host hepatocyte cell surface. Cleavage exposes the TSP type-1 (TSR) domain and is required for productive invasion of host hepatocytes but not for adhesion to the host cell membrane. Cleavage is dispensable for sporozoite development in the oocyst, motility and for traversal of host and vector cells. O-glycosylated; maybe by POFUT2.

The protein localises to the cell membrane. It is found in the cytoplasm. Functionally, essential sporozoite protein. In the mosquito vector, required for sporozoite development in the oocyst, migration through the vector hemolymph and entry into the vector salivary glands. In the vertebrate host, required for sporozoite migration through the host dermis and infection of host hepatocytes. Binds to highly sulfated heparan sulfate proteoglycans (HSPGs) on the surface of host hepatocytes. In the vertebrate host, binds to highly sulfated heparan sulfate proteoglycans (HSPGs) on the surface of host hepatocytes and is required for sporozoite invasion of the host hepatocytes. The sequence is that of Circumsporozoite protein from Plasmodium falciparum (isolate Wellcome).